Consider the following 308-residue polypeptide: Putative proline iminopeptidase (308 aa).

The region spanning 30–290 is the AB hydrolase-1 domain; that stretch reads KPVLYIHGGP…LYVTNNAGHS (261 aa). The active-site Nucleophile is the Ser105. Residue Asp261 is part of the active site. His289 (proton donor) is an active-site residue.

The protein belongs to the peptidase S33 family.

Its subcellular location is the cytoplasm. The catalysed reaction is Release of N-terminal proline from a peptide.. Specifically catalyzes the removal of N-terminal proline residues from peptides. The polypeptide is Putative proline iminopeptidase (pip) (Mycoplasma genitalium (strain ATCC 33530 / DSM 19775 / NCTC 10195 / G37) (Mycoplasmoides genitalium)).